The following is a 252-amino-acid chain: Triosephosphate isomerase (252 aa).

9–11 (NWK) serves as a coordination point for substrate. His-100 functions as the Electrophile in the catalytic mechanism. Glu-171 (proton acceptor) is an active-site residue. Substrate-binding positions include Gly-177, Ser-216, and 237 to 238 (GG).

Belongs to the triosephosphate isomerase family. In terms of assembly, homodimer.

Its subcellular location is the cytoplasm. The enzyme catalyses D-glyceraldehyde 3-phosphate = dihydroxyacetone phosphate. It participates in carbohydrate biosynthesis; gluconeogenesis. The protein operates within carbohydrate degradation; glycolysis; D-glyceraldehyde 3-phosphate from glycerone phosphate: step 1/1. Functionally, involved in the gluconeogenesis. Catalyzes stereospecifically the conversion of dihydroxyacetone phosphate (DHAP) to D-glyceraldehyde-3-phosphate (G3P). This Polynucleobacter necessarius subsp. necessarius (strain STIR1) protein is Triosephosphate isomerase.